Here is a 115-residue protein sequence, read N- to C-terminus: Ig heavy chain V-III region J606 (115 aa).

The Ig-like domain occupies 1-114; sequence EVKLEESGGG…WGQGTLVTVS (114 aa). Cys22 and Cys98 form a disulfide bridge.

This chain is Ig heavy chain V-III region J606, found in Mus musculus (Mouse).